A 208-amino-acid polypeptide reads, in one-letter code: Large ribosomal subunit protein uL4 (208 aa).

Residues 47 to 58 (ARAARERSDVAR) show a composition bias toward basic and acidic residues. The disordered stretch occupies residues 47–84 (ARAARERSDVARTGKKFGRQKGGGTARHGDRRAPIFIG).

It belongs to the universal ribosomal protein uL4 family. As to quaternary structure, part of the 50S ribosomal subunit.

Functionally, one of the primary rRNA binding proteins, this protein initially binds near the 5'-end of the 23S rRNA. It is important during the early stages of 50S assembly. It makes multiple contacts with different domains of the 23S rRNA in the assembled 50S subunit and ribosome. Forms part of the polypeptide exit tunnel. The sequence is that of Large ribosomal subunit protein uL4 from Sphingopyxis alaskensis (strain DSM 13593 / LMG 18877 / RB2256) (Sphingomonas alaskensis).